Consider the following 307-residue polypeptide: Fructokinase (307 aa).

It belongs to the carbohydrate kinase PfkB family.

The catalysed reaction is D-fructose + ATP = D-fructose 6-phosphate + ADP + H(+). Involved in sucrose metabolism. This is Fructokinase (scrK) from Klebsiella pneumoniae.